A 231-amino-acid polypeptide reads, in one-letter code: ATP phosphoribosyltransferase (231 aa).

The protein belongs to the ATP phosphoribosyltransferase family. Short subfamily. As to quaternary structure, heteromultimer composed of HisG and HisZ subunits.

The protein resides in the cytoplasm. The enzyme catalyses 1-(5-phospho-beta-D-ribosyl)-ATP + diphosphate = 5-phospho-alpha-D-ribose 1-diphosphate + ATP. Its pathway is amino-acid biosynthesis; L-histidine biosynthesis; L-histidine from 5-phospho-alpha-D-ribose 1-diphosphate: step 1/9. Functionally, catalyzes the condensation of ATP and 5-phosphoribose 1-diphosphate to form N'-(5'-phosphoribosyl)-ATP (PR-ATP). Has a crucial role in the pathway because the rate of histidine biosynthesis seems to be controlled primarily by regulation of HisG enzymatic activity. The sequence is that of ATP phosphoribosyltransferase from Brucella suis (strain ATCC 23445 / NCTC 10510).